The primary structure comprises 453 residues: Tol-Pal system protein TolB (453 aa).

An N-terminal signal peptide occupies residues 1–39 (MSFIPNTEAEALSALFSRRSVLGATAAGGLLATPLAAFA).

The protein belongs to the TolB family. As to quaternary structure, the Tol-Pal system is composed of five core proteins: the inner membrane proteins TolA, TolQ and TolR, the periplasmic protein TolB and the outer membrane protein Pal. They form a network linking the inner and outer membranes and the peptidoglycan layer.

It is found in the periplasm. In terms of biological role, part of the Tol-Pal system, which plays a role in outer membrane invagination during cell division and is important for maintaining outer membrane integrity. This chain is Tol-Pal system protein TolB, found in Gluconobacter oxydans (strain 621H) (Gluconobacter suboxydans).